Here is a 212-residue protein sequence, read N- to C-terminus: Pyrrolidone-carboxylate peptidase (212 aa).

Active-site residues include Glu80, Cys143, and His165.

The protein belongs to the peptidase C15 family. In terms of assembly, homotetramer.

It localises to the cytoplasm. It carries out the reaction Release of an N-terminal pyroglutamyl group from a polypeptide, the second amino acid generally not being Pro.. Functionally, removes 5-oxoproline from various penultimate amino acid residues except L-proline. The chain is Pyrrolidone-carboxylate peptidase from Vibrio campbellii (strain ATCC BAA-1116).